The following is a 139-amino-acid chain: Transcription antitermination protein NusB (139 aa).

Belongs to the NusB family.

In terms of biological role, involved in transcription antitermination. Required for transcription of ribosomal RNA (rRNA) genes. Binds specifically to the boxA antiterminator sequence of the ribosomal RNA (rrn) operons. This chain is Transcription antitermination protein NusB, found in Natranaerobius thermophilus (strain ATCC BAA-1301 / DSM 18059 / JW/NM-WN-LF).